A 407-amino-acid polypeptide reads, in one-letter code: Accessory Sec system protein translocase subunit SecY2 (407 aa).

Helical transmembrane passes span 22-42 (IAFTILILLIYILGSKITIVD), 68-88 (LNVFSLGLGPWLTAMIIISLI), 108-128 (EKFLTLGLSIIQGYFVINQFV), 136-156 (FTELLLLLILVTGAMLMMWLA), 169-189 (PIVLLSVIKSMFTQSLPIVSI), 191-211 (ILMLVVMVILIIVALFILLLT), 245-265 (ISIMISLSVFLLLTSTINLIF), 280-300 (FGHYMGVTIYLILQTVLGYLL), 343-363 (WFGTTIVTAIIGVPLYISLLV), and 366-386 (LSEYIYFAVQLMIMVYLAMNI).

This sequence belongs to the SecY/SEC61-alpha family. SecY2 subfamily. In terms of assembly, component of the accessory SecA2/SecY2 protein translocase complex required to export cell wall proteins. May form heterotrimers with SecE and SecG subunits.

Its subcellular location is the cell membrane. Its function is as follows. Part of the accessory SecA2/SecY2 system specifically required for export of possible cell wall proteins. The central subunit of a protein translocation channel. This Staphylococcus pseudintermedius (strain ED99) protein is Accessory Sec system protein translocase subunit SecY2.